A 379-amino-acid polypeptide reads, in one-letter code: tRNA-specific 2-thiouridylase MnmA (379 aa).

Residues 23–30 (AMSGGVDS) and L49 each bind ATP. The Nucleophile role is filled by C117. Cysteines 117 and 214 form a disulfide. G141 is a binding site for ATP. An interaction with tRNA region spans residues 163–165 (RDQ). The active-site Cysteine persulfide intermediate is the C214.

It belongs to the MnmA/TRMU family.

Its subcellular location is the cytoplasm. It carries out the reaction S-sulfanyl-L-cysteinyl-[protein] + uridine(34) in tRNA + AH2 + ATP = 2-thiouridine(34) in tRNA + L-cysteinyl-[protein] + A + AMP + diphosphate + H(+). Its function is as follows. Catalyzes the 2-thiolation of uridine at the wobble position (U34) of tRNA, leading to the formation of s(2)U34. The chain is tRNA-specific 2-thiouridylase MnmA from Cereibacter sphaeroides (strain ATCC 17029 / ATH 2.4.9) (Rhodobacter sphaeroides).